A 1091-amino-acid polypeptide reads, in one-letter code: Leucine--tRNA ligase, cytoplasmic (1091 aa).

The 'HIGH' region signature appears at 53 to 63 (PYMNGYLHIGH). The short motif at 715–719 (KMSKS) is the 'KMSKS' region element. Position 718 (Lys718) interacts with ATP.

Belongs to the class-I aminoacyl-tRNA synthetase family.

Its subcellular location is the cytoplasm. The protein resides in the cytosol. The enzyme catalyses tRNA(Leu) + L-leucine + ATP = L-leucyl-tRNA(Leu) + AMP + diphosphate. Functionally, catalyzes the specific attachment of an amino acid to its cognate tRNA in a two step reaction: the amino acid (AA) is first activated by ATP to form AA-AMP and then transferred to the acceptor end of the tRNA. This Arabidopsis thaliana (Mouse-ear cress) protein is Leucine--tRNA ligase, cytoplasmic.